The chain runs to 498 residues: ATP synthase subunit beta, chloroplastic (498 aa).

ATP is bound at residue 172–179 (GGAGVGKT).

The protein belongs to the ATPase alpha/beta chains family. F-type ATPases have 2 components, CF(1) - the catalytic core - and CF(0) - the membrane proton channel. CF(1) has five subunits: alpha(3), beta(3), gamma(1), delta(1), epsilon(1). CF(0) has four main subunits: a(1), b(1), b'(1) and c(9-12).

It localises to the plastid. It is found in the chloroplast thylakoid membrane. The catalysed reaction is ATP + H2O + 4 H(+)(in) = ADP + phosphate + 5 H(+)(out). Functionally, produces ATP from ADP in the presence of a proton gradient across the membrane. The catalytic sites are hosted primarily by the beta subunits. The sequence is that of ATP synthase subunit beta, chloroplastic from Magnolia tripetala (Umbrella-tree).